Reading from the N-terminus, the 1391-residue chain is Periaxin (1391 aa).

Serine 7 is modified (phosphoserine). Residues 16 to 99 (LVEIIVETEA…YKVSFCLKRT (84 aa)) form the PDZ domain. Positions 70–84 (VFFENFKYEDALRLL) match the Nuclear export signal motif. The Nuclear localization signal motif lies at 118-196 (KGPRAKVAKL…RLQLPRLRVR (79 aa)). Position 243 is a phosphoserine (serine 243). Tandem repeats lie at residues 432–436 (GPEVK), 440–444 (GPEVK), 448–452 (VPEVK), 456–460 (VPEAA), 464–468 (VQLPE), 469–473 (VQLPK), 474–478 (MSDMK), 482–486 (IPEMV), 487–491 (VPDVR), 495–499 (VQLPK), 500–504 (VPEMK), and 508–512 (MKLPK). The interval 432-719 (GPEVKAPTGP…MQVSQVPEVQ (288 aa)) is 45 X 5 AA approximate tandem repeats of [LVMGIED]-[PQSKHARMI]-[EDKLVTR]-[LIVMAP]-[AQKHRPEVSD]; that may have a tripeptide spacer of [LVIDEA]-[PMSVI]-[KEATDQ]. Residues 513 to 517 (WPEMA) form a 13; approximate repeat. Tandem repeats lie at residues 521 to 525 (VHLPD), 526 to 530 (VQLPK), 534 to 538 (MKLPK), 539 to 543 (VPEMA), 547 to 551 (VHLPD), 552 to 556 (VQLPK), 560 to 564 (MKLPE), 565 to 569 (MKLPK), 573 to 577 (MAVPD), 578 to 582 (VRLPE), 583 to 587 (VQLPK), 591 to 595 (VKLPK), 596 to 600 (MPEMA), 601 to 605 (VPDVH), 609 to 613 (LQLPK), 614 to 618 (MSEVK), 619 to 623 (LPKMP), 627 to 631 (VPDVR), 632 to 636 (LPEVQ), 637 to 641 (LPKVS), 645 to 649 (LPKMP), 650 to 654 (EMTMP), 655 to 659 (DIRLP), 663 to 667 (LPKVP), 671 to 675 (LPEMK), 676 to 680 (LPEIK), 684 to 688 (VPDMA), 689 to 693 (VPDVP), 697 to 701 (LQLPK), 702 to 706 (VSDIR), 707 to 711 (LPEMQ), and 715 to 719 (VPEVQ). Residues serine 848, serine 979, serine 1028, serine 1279, serine 1283, serine 1285, serine 1293, serine 1331, and serine 1337 each carry the phosphoserine modification. The tract at residues 1267–1366 (LPRVGFSQSE…DREEGGFRVR (100 aa)) is disordered. Low complexity predominate over residues 1275–1285 (SESVSGEGSPS). The span at 1354–1363 (GSRDREEGGF) shows a compositional bias: basic and acidic residues. Serine 1369 bears the Phosphoserine mark.

Belongs to the periaxin family. In terms of assembly, homodimer (via PDZ domain). Interacts with SCN10A. Found in a complex with SCN10A. Interacts with DRP2. Identified in a dystroglycan complex that contains at least PRX, DRP2, UTRN, DMD and DAG1. Detected in a complex composed of at least EZR, AHNAK, PPL and PRX. Identified in a complex with EZR, AHNAK, BFSP1, BFSP2, ANK2, PLEC, VIM and spectrin. In terms of tissue distribution, detected in myelinating Schwann cells in intramuscular nerves in triangularis sterni. Detected in sciatic nerve. Detected in eye lens fiber cells. Isoform 1 is detected in myelinating Schwann cells in sciatic nerve. Isoform 2 is detected in myelinating Schwann cells in sciatic nerve (at protein level). Detected in sciatic nerve.

Its subcellular location is the cell membrane. It localises to the cell junction. It is found in the nucleus. The protein localises to the cytoplasm. In terms of biological role, scaffolding protein that functions as part of a dystroglycan complex in Schwann cells, and as part of EZR and AHNAK-containing complexes in eye lens fiber cells. Required for the maintenance of the peripheral myelin sheath that is essential for normal transmission of nerve impulses and normal perception of sensory stimuli. Required for normal transport of MBP mRNA from the perinuclear to the paranodal regions. Required for normal remyelination after nerve injury. Required for normal elongation of Schwann cells and normal length of the internodes between the nodes of Ranvier. The demyelinated nodes of Ranvier permit saltatory transmission of nerve impulses; shorter internodes cause slower transmission of nerve impulses. Required for the formation of appositions between the abaxonal surface of the myelin sheath and the Schwann cell plasma membrane; the Schwann cell cytoplasm is restricted to regions between these appositions. Required for the formation of Cajal bands and of Schmidt-Lanterman incisures that correspond to short, cytoplasm-filled regions on myelinated nerves. Recruits DRP2 to the Schwann cell plasma membrane. Required for normal protein composition of the eye lens fiber cell plasma membrane and normal eye lens fiber cell morphology. The chain is Periaxin (Prx) from Mus musculus (Mouse).